A 338-amino-acid polypeptide reads, in one-letter code: MSKPIVLSGVQPSGELSIGNYLGALRQWQQMQDDYDCQYCVVDLHAITVRQDPQALHEATLDALAICLAVGVDPKKSTLFVQSHVPEHAQLGWVLNCYTQMGELSRMTQFKDKSARYANDVNAGLFGYPVLMAADILLYGAHQVPVGSDQKQHLELARDIATRFNNIYSPEQPIFTIPEPYIPTVNARVMSLQDATKKMSKSDDNRKNVITLLEDPKSIIKKINKAQTDAETPPRIAYDVENKAGIANLMGLYSAATGKTFAEIEAQYAGVEMYGPFKKDVGEAVVAMLEPVQAEYQRIRNDREYLNSVMRDGAEKASAKALQTLKKVYAAVGFVARP.

Residues 11–13 (QPS) and 19–20 (GN) contribute to the ATP site. The 'HIGH' region motif lies at 12–20 (PSGELSIGN). Residue Asp-135 coordinates L-tryptophan. Residues 147 to 149 (GSD), Val-189, and 198 to 202 (KMSKS) contribute to the ATP site. Positions 198–202 (KMSKS) match the 'KMSKS' region motif.

It belongs to the class-I aminoacyl-tRNA synthetase family. In terms of assembly, homodimer.

It localises to the cytoplasm. It catalyses the reaction tRNA(Trp) + L-tryptophan + ATP = L-tryptophyl-tRNA(Trp) + AMP + diphosphate + H(+). Catalyzes the attachment of tryptophan to tRNA(Trp). The chain is Tryptophan--tRNA ligase from Vibrio cholerae serotype O1 (strain ATCC 39315 / El Tor Inaba N16961).